A 763-amino-acid polypeptide reads, in one-letter code: Putative pentatricopeptide repeat-containing protein At1g74580 (763 aa).

PPR repeat units lie at residues 39–69, 75–109, 110–144, 145–179, 180–214, 215–249, 250–284, 285–319, 320–354, 355–389, 390–424, 425–459, 460–494, 495–529, 530–564, 565–595, 601–635, 636–670, and 671–705; these read TLST…MREN, LEGV…DCEP, TVFS…GITP, DVYS…GCEM, NVVA…GVSL, CLST…GVLP, NLFT…GPKP, DVIT…GLEP, DSYT…GFVP, DQFT…GIKP, NVIL…GLIP, EVQT…GYFP, DIFT…GVDP, DVYT…GCAP, NLFT…SVNP, DAVT…MEEA, STPT…CLGP, DGYT…GFIP, and SLTT…GLVP.

It belongs to the PPR family. P subfamily.

In Arabidopsis thaliana (Mouse-ear cress), this protein is Putative pentatricopeptide repeat-containing protein At1g74580.